A 548-amino-acid chain; its full sequence is MASRVESAAWRALQAHQQEIAPLQMRQLFAEDSARFERFSLRWQGMLCDYSKHRITARTMELLLDLARSAEIEAARNAMMQGQPINLTEKRAVLHTALRKPQSVPFAVDGQNVAADVAEVLAQMEGCCNRIISGEWVGYTGKAMTDIVNIGIGGSDLGPYMVTEALRPFAHGKLNVHFVSNVDGTHLSETLKKLNPETTLFIVASKTFTTQETLSNAMSARAWFLQCAVDAAHIAKHFVAVSTNRAKVVEFGIDEANMFRFWDWVGGRYSLWSSIGLSIAMYLGFEKFRQLLAGAYAMDEHFCSAPLESNMPVIMAMLGIWYSNFFGCTSHAVIPYDQYLHRFPAYLQQLDMESNGKRVTRDGTVVDYATGAVIWGEPGTNSQHAFFQLLHQGTQIIPADFILPLKTQNPIGAHHDMLASNCFAQTEALMKGKSEEEVERELVAAGADAATIAALLPHKVFPGNRPTTTLLLDELNPFTLGSLIALYEHKVFVQGIVWNINSFDQWGVELGKQLANVILPELQASSNAAAHDSSTNALINAYRAQRYC.

E353 serves as the catalytic Proton donor. Active-site residues include H384 and K512.

This sequence belongs to the GPI family.

It localises to the cytoplasm. It carries out the reaction alpha-D-glucose 6-phosphate = beta-D-fructose 6-phosphate. The protein operates within carbohydrate biosynthesis; gluconeogenesis. It functions in the pathway carbohydrate degradation; glycolysis; D-glyceraldehyde 3-phosphate and glycerone phosphate from D-glucose: step 2/4. In terms of biological role, catalyzes the reversible isomerization of glucose-6-phosphate to fructose-6-phosphate. The polypeptide is Glucose-6-phosphate isomerase (Chlorobium chlorochromatii (strain CaD3)).